A 255-amino-acid polypeptide reads, in one-letter code: MLKIADTTFHSRLFTGTGKFANANLMTQAIAASGSQLVTMAMKRIDLQSGNDAILAPLQKLGVKLLPNTSGAKTAEEALFAARLAREALATNWIKLEIHPDVKYLLPDPIETLKGAEMLVKDGFVVLPYCSADPVLCKRLEEVGCAAVMPLGAPIGSNQGLLTRDFLQIIIEQAQVPVVIDAGIGAPSHALEALELGADAVLVNTAIAVARNPVKMAQAFRIAIEAGELSYQAGRASPKQHAVASSPLTDFLRVL.

The active-site Schiff-base intermediate with DXP is Lys-95. 1-deoxy-D-xylulose 5-phosphate is bound by residues Gly-156, 182–183 (AG), and 204–205 (NT).

This sequence belongs to the ThiG family. In terms of assembly, homotetramer. Forms heterodimers with either ThiH or ThiS.

The protein resides in the cytoplasm. The enzyme catalyses [ThiS sulfur-carrier protein]-C-terminal-Gly-aminoethanethioate + 2-iminoacetate + 1-deoxy-D-xylulose 5-phosphate = [ThiS sulfur-carrier protein]-C-terminal Gly-Gly + 2-[(2R,5Z)-2-carboxy-4-methylthiazol-5(2H)-ylidene]ethyl phosphate + 2 H2O + H(+). It participates in cofactor biosynthesis; thiamine diphosphate biosynthesis. Catalyzes the rearrangement of 1-deoxy-D-xylulose 5-phosphate (DXP) to produce the thiazole phosphate moiety of thiamine. Sulfur is provided by the thiocarboxylate moiety of the carrier protein ThiS. In vitro, sulfur can be provided by H(2)S. The polypeptide is Thiazole synthase (Photorhabdus laumondii subsp. laumondii (strain DSM 15139 / CIP 105565 / TT01) (Photorhabdus luminescens subsp. laumondii)).